An 84-amino-acid polypeptide reads, in one-letter code: Large ribosomal subunit protein bL27 (84 aa).

The interval 1 to 27 (MAHKKGQGASRNGRDSKSKRLGVKVGA) is disordered.

This sequence belongs to the bacterial ribosomal protein bL27 family.

This chain is Large ribosomal subunit protein bL27, found in Chlamydia pneumoniae (Chlamydophila pneumoniae).